The following is a 377-amino-acid chain: tRNA(Met) cytidine acetate ligase (377 aa).

Residues 7–20, G101, N152, and R179 each bind ATP; that span reads ITEYNPFHNGHLYH.

It belongs to the TmcAL family.

It is found in the cytoplasm. It carries out the reaction cytidine(34) in elongator tRNA(Met) + acetate + ATP = N(4)-acetylcytidine(34) in elongator tRNA(Met) + AMP + diphosphate. Functionally, catalyzes the formation of N(4)-acetylcytidine (ac(4)C) at the wobble position of elongator tRNA(Met), using acetate and ATP as substrates. First activates an acetate ion to form acetyladenylate (Ac-AMP) and then transfers the acetyl group to tRNA to form ac(4)C34. The sequence is that of tRNA(Met) cytidine acetate ligase from Oenococcus oeni (strain ATCC BAA-331 / PSU-1).